A 102-amino-acid chain; its full sequence is Large ribosomal subunit protein uL24 (102 aa).

Positions His-44–Ser-65 are disordered.

The protein belongs to the universal ribosomal protein uL24 family. Part of the 50S ribosomal subunit.

Its function is as follows. One of two assembly initiator proteins, it binds directly to the 5'-end of the 23S rRNA, where it nucleates assembly of the 50S subunit. One of the proteins that surrounds the polypeptide exit tunnel on the outside of the subunit. This is Large ribosomal subunit protein uL24 from Shouchella clausii (strain KSM-K16) (Alkalihalobacillus clausii).